We begin with the raw amino-acid sequence, 1036 residues long: Isoleucine--tRNA ligase (1036 aa).

Residues 46–56 carry the 'HIGH' region motif; it reads PFATGLPHYGH. A 'KMSKS' region motif is present at residues 589–593; that stretch reads KMSKR. Lys592 provides a ligand contact to ATP.

It belongs to the class-I aminoacyl-tRNA synthetase family. IleS type 2 subfamily. Monomer. It depends on Zn(2+) as a cofactor.

It is found in the cytoplasm. The enzyme catalyses tRNA(Ile) + L-isoleucine + ATP = L-isoleucyl-tRNA(Ile) + AMP + diphosphate. Functionally, catalyzes the attachment of isoleucine to tRNA(Ile). As IleRS can inadvertently accommodate and process structurally similar amino acids such as valine, to avoid such errors it has two additional distinct tRNA(Ile)-dependent editing activities. One activity is designated as 'pretransfer' editing and involves the hydrolysis of activated Val-AMP. The other activity is designated 'posttransfer' editing and involves deacylation of mischarged Val-tRNA(Ile). This chain is Isoleucine--tRNA ligase, found in Chlamydia trachomatis serovar L2 (strain ATCC VR-902B / DSM 19102 / 434/Bu).